Here is a 288-residue protein sequence, read N- to C-terminus: Acetylglutamate kinase (288 aa).

Substrate-binding positions include 66–67 (GG), Arg-88, and Asn-182.

The protein belongs to the acetylglutamate kinase family. ArgB subfamily.

It is found in the cytoplasm. It carries out the reaction N-acetyl-L-glutamate + ATP = N-acetyl-L-glutamyl 5-phosphate + ADP. It functions in the pathway amino-acid biosynthesis; L-arginine biosynthesis; N(2)-acetyl-L-ornithine from L-glutamate: step 2/4. Functionally, catalyzes the ATP-dependent phosphorylation of N-acetyl-L-glutamate. The protein is Acetylglutamate kinase of Brachyspira hyodysenteriae (strain ATCC 49526 / WA1).